We begin with the raw amino-acid sequence, 478 residues long: BTB/POZ domain-containing protein 17 (478 aa).

The first 28 residues, 1–28 (MPRRGYSKPGSWGSFWAMLTLVGLVTHA), serve as a signal peptide directing secretion. Asn61, Asn100, and Asn195 each carry an N-linked (GlcNAc...) asparagine glycan. Residues 63–132 (SDVVLRVQAA…LYCGELTVLL (70 aa)) form the BTB domain. One can recognise a BACK domain in the interval 169 to 269 (AVGWYHYAVG…IPPAQLFQLQ (101 aa)).

It is found in the secreted. In Homo sapiens (Human), this protein is BTB/POZ domain-containing protein 17 (BTBD17).